A 351-amino-acid chain; its full sequence is Holliday junction branch migration complex subunit RuvB (351 aa).

The tract at residues 1–182 (MNDRLITPDA…FGIVQRLEYY (182 aa)) is large ATPase domain (RuvB-L). Residues Ile21, Arg22, Gly63, Lys66, Thr67, Thr68, 129-131 (EDF), Arg172, Tyr182, and Arg219 each bind ATP. Thr67 lines the Mg(2+) pocket. A small ATPAse domain (RuvB-S) region spans residues 183-253 (NVADLSGIVK…VAHAAMELLN (71 aa)). Positions 256–351 (RNGFDEQDRR…QDAPPVGRER (96 aa)) are head domain (RuvB-H). DNA is bound by residues Arg292, Arg311, and Arg316. A disordered region spans residues 328-351 (LNPPRQPDTSPDLFQDAPPVGRER).

This sequence belongs to the RuvB family. In terms of assembly, homohexamer. Forms an RuvA(8)-RuvB(12)-Holliday junction (HJ) complex. HJ DNA is sandwiched between 2 RuvA tetramers; dsDNA enters through RuvA and exits via RuvB. An RuvB hexamer assembles on each DNA strand where it exits the tetramer. Each RuvB hexamer is contacted by two RuvA subunits (via domain III) on 2 adjacent RuvB subunits; this complex drives branch migration. In the full resolvosome a probable DNA-RuvA(4)-RuvB(12)-RuvC(2) complex forms which resolves the HJ.

It localises to the cytoplasm. It carries out the reaction ATP + H2O = ADP + phosphate + H(+). Functionally, the RuvA-RuvB-RuvC complex processes Holliday junction (HJ) DNA during genetic recombination and DNA repair, while the RuvA-RuvB complex plays an important role in the rescue of blocked DNA replication forks via replication fork reversal (RFR). RuvA specifically binds to HJ cruciform DNA, conferring on it an open structure. The RuvB hexamer acts as an ATP-dependent pump, pulling dsDNA into and through the RuvAB complex. RuvB forms 2 homohexamers on either side of HJ DNA bound by 1 or 2 RuvA tetramers; 4 subunits per hexamer contact DNA at a time. Coordinated motions by a converter formed by DNA-disengaged RuvB subunits stimulates ATP hydrolysis and nucleotide exchange. Immobilization of the converter enables RuvB to convert the ATP-contained energy into a lever motion, pulling 2 nucleotides of DNA out of the RuvA tetramer per ATP hydrolyzed, thus driving DNA branch migration. The RuvB motors rotate together with the DNA substrate, which together with the progressing nucleotide cycle form the mechanistic basis for DNA recombination by continuous HJ branch migration. Branch migration allows RuvC to scan DNA until it finds its consensus sequence, where it cleaves and resolves cruciform DNA. This is Holliday junction branch migration complex subunit RuvB from Alkalilimnicola ehrlichii (strain ATCC BAA-1101 / DSM 17681 / MLHE-1).